A 204-amino-acid chain; its full sequence is Colicin-A (204 aa).

2 helical membrane passes run 139–161 and 165–187; these read SWVL…LGAY and LGVP…GALI.

This sequence belongs to the channel forming colicin family.

It is found in the cell membrane. In terms of biological role, this colicin is a channel-forming colicin. This class of transmembrane toxins depolarize the cytoplasmic membrane, leading to dissipation of cellular energy. Its function is as follows. Colicins are polypeptide toxins produced by and active against E.coli and closely related bacteria. The chain is Colicin-A (caa) from Escherichia coli.